The sequence spans 257 residues: Neurotrophin-3 (257 aa).

The signal sequence occupies residues 1–18 (MSILFYVIFLAYLRGIQG). Positions 19 to 138 (NNMDQRSLPE…VANRTSRRKR (120 aa)) are excised as a propeptide. The segment at 61–81 (STLPKAEAPREPERGGPAKSA) is disordered. Over residues 67 to 76 (EAPREPERGG) the composition is skewed to basic and acidic residues. N-linked (GlcNAc...) asparagine glycosylation is present at Asn-131. 3 disulfides stabilise this stretch: Cys-152-Cys-217, Cys-195-Cys-246, and Cys-205-Cys-248.

The protein belongs to the NGF-beta family. Brain and peripheral tissues.

Its subcellular location is the secreted. Functionally, seems to promote the survival of visceral and proprioceptive sensory neurons. The sequence is that of Neurotrophin-3 (NTF3) from Homo sapiens (Human).